The chain runs to 359 residues: Nicotinate-nucleotide--dimethylbenzimidazole phosphoribosyltransferase (359 aa).

Residue glutamate 318 is the Proton acceptor of the active site.

It belongs to the CobT family. In terms of assembly, homodimer.

The catalysed reaction is 5,6-dimethylbenzimidazole + nicotinate beta-D-ribonucleotide = alpha-ribazole 5'-phosphate + nicotinate + H(+). It participates in nucleoside biosynthesis; alpha-ribazole biosynthesis; alpha-ribazole from 5,6-dimethylbenzimidazole: step 1/2. Its function is as follows. Catalyzes the synthesis of alpha-ribazole-5'-phosphate from nicotinate mononucleotide (NAMN) and 5,6-dimethylbenzimidazole (DMB). The chain is Nicotinate-nucleotide--dimethylbenzimidazole phosphoribosyltransferase from Escherichia coli O81 (strain ED1a).